A 324-amino-acid polypeptide reads, in one-letter code: GTP cyclohydrolase 1 (324 aa).

Disordered regions lie at residues 33–59 (GRNN…NQAE) and 79–119 (VPLA…TPGH). Positions 40–49 (STSSTSGTSS) are enriched in low complexity. 2 stretches are compositionally biased toward polar residues: residues 50–59 (LADRQQNQAE) and 93–117 (TNGS…STTP). Zn(2+)-binding residues include Cys214, His217, and Cys285.

It belongs to the GTP cyclohydrolase I family. As to quaternary structure, toroid-shaped homodecamer, composed of two pentamers of five dimers. As to expression, isoform B is expressed almost exclusively in adult heads.

The catalysed reaction is GTP + H2O = 7,8-dihydroneopterin 3'-triphosphate + formate + H(+). Its pathway is cofactor biosynthesis; 7,8-dihydroneopterin triphosphate biosynthesis; 7,8-dihydroneopterin triphosphate from GTP: step 1/1. Isoform B is required for eye pigment production, Isoform C may be required for normal embryonic development and segment pattern formation. This chain is GTP cyclohydrolase 1 (Pu), found in Drosophila melanogaster (Fruit fly).